The primary structure comprises 331 residues: RNA 3'-terminal phosphate cyclase (331 aa).

ATP-binding positions include glutamine 100 and 276–280; that span reads HLADQ. Histidine 301 (tele-AMP-histidine intermediate) is an active-site residue.

It belongs to the RNA 3'-terminal cyclase family. Type 1 subfamily.

It is found in the cytoplasm. The catalysed reaction is a 3'-end 3'-phospho-ribonucleotide-RNA + ATP = a 3'-end 2',3'-cyclophospho-ribonucleotide-RNA + AMP + diphosphate. Its function is as follows. Catalyzes the conversion of 3'-phosphate to a 2',3'-cyclic phosphodiester at the end of RNA. The mechanism of action of the enzyme occurs in 3 steps: (A) adenylation of the enzyme by ATP; (B) transfer of adenylate to an RNA-N3'P to produce RNA-N3'PP5'A; (C) and attack of the adjacent 2'-hydroxyl on the 3'-phosphorus in the diester linkage to produce the cyclic end product. The biological role of this enzyme is unknown but it is likely to function in some aspects of cellular RNA processing. The chain is RNA 3'-terminal phosphate cyclase from Methanosarcina barkeri (strain Fusaro / DSM 804).